Reading from the N-terminus, the 43-residue chain is Metallothionein-2 (43 aa).

Blocked amino end (Met) is present on Met-1.

This sequence belongs to the metallothionein superfamily. Type 5 family.

In terms of biological role, this protein binds cations of several transition elements. Thought to be involved in metal ion homeostasis. This is Metallothionein-2 (MtnB) from Drosophila melanogaster (Fruit fly).